A 123-amino-acid polypeptide reads, in one-letter code: Ribonuclease P protein component (123 aa).

It belongs to the RnpA family. In terms of assembly, consists of a catalytic RNA component (M1 or rnpB) and a protein subunit.

The catalysed reaction is Endonucleolytic cleavage of RNA, removing 5'-extranucleotides from tRNA precursor.. Functionally, RNaseP catalyzes the removal of the 5'-leader sequence from pre-tRNA to produce the mature 5'-terminus. It can also cleave other RNA substrates such as 4.5S RNA. The protein component plays an auxiliary but essential role in vivo by binding to the 5'-leader sequence and broadening the substrate specificity of the ribozyme. In Streptomyces bikiniensis, this protein is Ribonuclease P protein component.